The following is a 968-amino-acid chain: RNA polymerase-associated protein RapA (968 aa).

A Helicase ATP-binding domain is found at 164-334 (DVGRRHAPRV…FARLRLLDPN (171 aa)). Residue 177-184 (DEVGLGKT) participates in ATP binding. The DEAH box signature appears at 280-283 (DEAH). The region spanning 490-685 (RVEWLMGYLT…ALKAQLEQGR (196 aa)) is the Helicase C-terminal domain.

Belongs to the SNF2/RAD54 helicase family. RapA subfamily. In terms of assembly, interacts with the RNAP. Has a higher affinity for the core RNAP than for the holoenzyme. Its ATPase activity is stimulated by binding to RNAP.

Functionally, transcription regulator that activates transcription by stimulating RNA polymerase (RNAP) recycling in case of stress conditions such as supercoiled DNA or high salt concentrations. Probably acts by releasing the RNAP, when it is trapped or immobilized on tightly supercoiled DNA. Does not activate transcription on linear DNA. Probably not involved in DNA repair. This is RNA polymerase-associated protein RapA from Salmonella choleraesuis (strain SC-B67).